The primary structure comprises 458 residues: MLSMSSMDPWPEGSVGLEEEVVTAAAQAERLDTSTPLQCNTSLDSDNLDDSLTSLQWLQEFSILNASTGQHTSPSSHSHLMGSDAPSSPLAGDPASIGMPLTPGKPTAASFCRVPMFSALPSLVAHGHCPDEVDYKSNPHIKPPYSYATLICMAMQASKKTKITLSCIYKWITDNFCYFRHADPTWQNSIRHNLSLNKCFIKVPRQKDEPGKGGFWKIDPQYAERLLNGAYKKRRLPPVQINPALQHRLRMNAQATGVISRNLSVSPESQQLLKDFEEATSADQNWDPRLAEATMLSCWISGKGTNKRKQPYNHRTGKTPRRSSSPLLVMDEQEDLSSLRGNFDWDALLDSALNGELSLNEGSPLSPTPQDEELMIRGTHISPQEAPVENHVLMETQRSGDEDFDEETFLATAFLQSPWSEVDESNRSDFLGSSTVSIDQLFDLSFGGDLSSKIETLL.

The span at 68–78 (TGQHTSPSSHS) shows a compositional bias: polar residues. The interval 68-99 (TGQHTSPSSHSHLMGSDAPSSPLAGDPASIGM) is disordered. The fork-head DNA-binding region spans 142 to 236 (KPPYSYATLI…LNGAYKKRRL (95 aa)). Positions 305–321 (TNKRKQPYNHRTGKTPR) are enriched in basic residues. Residues 305-324 (TNKRKQPYNHRTGKTPRRSS) form a disordered region.

It belongs to the FOXJ1 family. In terms of tissue distribution, expressed in floor plate, dorsal forerunner cells, Kupffers vesicle, the floor plate, pronephric ducts and kidney.

The protein localises to the nucleus. Key transcription factor required for motile ciliogenesis. Activates genes essential for motile cilia formation and function. Its activity is sufficient for ectopic development of cilia that resemble motile cilia. In Danio rerio (Zebrafish), this protein is Forkhead box protein J1-A.